We begin with the raw amino-acid sequence, 392 residues long: Phosphopentomutase (392 aa).

Mn(2+) is bound by residues Asp-14, Asp-286, His-291, Asp-327, His-328, and His-339.

The protein belongs to the phosphopentomutase family. The cofactor is Mn(2+).

Its subcellular location is the cytoplasm. It carries out the reaction 2-deoxy-alpha-D-ribose 1-phosphate = 2-deoxy-D-ribose 5-phosphate. The enzyme catalyses alpha-D-ribose 1-phosphate = D-ribose 5-phosphate. The protein operates within carbohydrate degradation; 2-deoxy-D-ribose 1-phosphate degradation; D-glyceraldehyde 3-phosphate and acetaldehyde from 2-deoxy-alpha-D-ribose 1-phosphate: step 1/2. Isomerase that catalyzes the conversion of deoxy-ribose 1-phosphate (dRib-1-P) and ribose 1-phosphate (Rib-1-P) to deoxy-ribose 5-phosphate (dRib-5-P) and ribose 5-phosphate (Rib-5-P), respectively. The protein is Phosphopentomutase of Staphylococcus aureus (strain Mu3 / ATCC 700698).